We begin with the raw amino-acid sequence, 1515 residues long: Adhesion G protein-coupled receptor L1 (1515 aa).

The first 24 residues, 1–24 (MARLAAALWSLCVTTVLVTSATQG), serve as a signal peptide directing secretion. Topologically, residues 25–857 (LSRAGLPFGL…EIYQGRINEL (833 aa)) are extracellular. Residues 40–129 (ACEGYPIELR…KYLEVQYDCV (90 aa)) enclose the SUEL-type lectin domain. 5 disulfides stabilise this stretch: C41–C71, C50–C128, C83–C115, C96–C102, and C140–C322. Residue E42 participates in alpha-L-rhamnose binding. A glycan (N-linked (GlcNAc...) asparagine) is linked at N98. Residue 117–120 (GTYK) participates in alpha-L-rhamnose binding. An Olfactomedin-like domain is found at 139–398 (VCPGTLQKVL…VVRYSLEFGP (260 aa)). Residues 400-468 (DPSAGPATSP…APAPSTRRPP (69 aa)) are disordered. Residues 405 to 441 (PATSPPLSTTTTARPTPLTSTASPAATTPLRRAPLTT) are compositionally biased toward low complexity. The segment covering 453-468 (DLPPATAPAPSTRRPP) has biased composition (pro residues). Disulfide bonds link C480–C515 and C503–C532. 6 N-linked (GlcNAc...) asparagine glycosylation sites follow: N531, N640, N741, N800, N805, and N826. The GAIN-B domain occupies 669–850 (PARFLAAKQN…AVLMAHREIY (182 aa)). 2 disulfide bridges follow: C801/C832 and C820/C834. The tract at residues 801–850 (CSFWNYSERSMLGYWSTQGCRLVESNKTHTTCACSHLTNFAVLMAHREIY) is GPS. A helical membrane pass occupies residues 858 to 878 (LLSVITWVGIVISLVCLAICI). Residues 879–892 (STFCFLRGLQTDRN) lie on the Cytoplasmic side of the membrane. Residues 893–913 (TIHKNLCINLFLAELLFLVGI) form a helical membrane-spanning segment. Residues 914 to 919 (DKTQYE) are Extracellular-facing. A helical membrane pass occupies residues 920-940 (VACPIFAGLLHYFFLAAFSWL). Residues 941–964 (CLEGVHLYLLLVEVFESEYSRTKY) lie on the Cytoplasmic side of the membrane. The helical transmembrane segment at 965 to 985 (YYLGGYCFPALVVGIAAAIDY) threads the bilayer. Over 986-1001 (RSYGTEKACWLRVDNY) the chain is Extracellular. The chain crosses the membrane as a helical span at residues 1002–1022 (FIWSFIGPVSFVIVVNLVFLM). Topologically, residues 1023–1049 (VTLHKMIRSSSVLKPDSSRLDNIKSWA) are cytoplasmic. Residues 1050–1070 (LGAIALLFLLGLTWAFGLLFI) form a helical membrane-spanning segment. Over 1071–1074 (NKES) the chain is Extracellular. The chain crosses the membrane as a helical span at residues 1075-1095 (VVMAYLFTTFNAFQGVFIFVF). The Cytoplasmic segment spans residues 1096–1515 (HCALQKKVHK…DGQMQLVTSL (420 aa)). Residues 1144 to 1184 (TQVPGQGRHIHQVSLGPRGRSALPESQKDPGGQSGPGDPLT) are disordered. R1237 bears the Omega-N-methylarginine mark. Phosphoserine is present on S1263. Disordered regions lie at residues 1291-1316 (FNNS…RGRN), 1337-1369 (RGAS…PGGA), 1401-1470 (ESES…SRPP), and 1492-1515 (YLAA…VTSL). 2 stretches are compositionally biased toward pro residues: residues 1345-1356 (GPPPEPPVPPVP) and 1449-1461 (ALPP…PGPP). S1497 and S1514 each carry phosphoserine.

The protein belongs to the G-protein coupled receptor 2 family. Adhesion G-protein coupled receptor (ADGR) subfamily. As to quaternary structure, forms a heterodimer, consisting of a large extracellular region (p120) non-covalently linked to a seven-transmembrane moiety (p85). Interacts with syntaxin and with proteins of the SHANK family via the PDZ domain. Isoform 2 interacts with TENM2. Interacts (via extracellular domain) with FLRT1, FLRT2 and FLRT3 (via extracellular domain). Post-translationally, autoproteolytically cleaved into 2 subunits, an extracellular subunit and a seven-transmembrane subunit. This proteolytic processing takes place early in the biosynthetic pathway, either in the endoplasmic reticulum or in the early compartment of the Golgi apparatus. Expressed in the brain (at protein level). Brain specific distribution but low levels are also detected in most tissues.

It is found in the cell membrane. The protein resides in the cell projection. It localises to the axon. The protein localises to the growth cone. Its subcellular location is the synapse. It is found in the presynaptic cell membrane. The protein resides in the synaptosome. In terms of biological role, calcium-independent receptor of high affinity for alpha-latrotoxin, an excitatory neurotoxin present in black widow spider venom which triggers massive exocytosis from neurons and neuroendocrine cells. Receptor probably implicated in the regulation of exocytosis. Receptor for TENM2 that mediates heterophilic synaptic cell-cell contact and postsynaptic specialization. This Rattus norvegicus (Rat) protein is Adhesion G protein-coupled receptor L1.